The chain runs to 40 residues: Dermonecrotic toxin LgSicTox-alphaI-1 (40 aa).

The Mg(2+) site is built by E32 and D34.

This sequence belongs to the arthropod phospholipase D family. Class II subfamily. The cofactor is Mg(2+). Contains 2 disulfide bonds. In terms of tissue distribution, expressed by the venom gland.

It localises to the secreted. The enzyme catalyses an N-(acyl)-sphingosylphosphocholine = an N-(acyl)-sphingosyl-1,3-cyclic phosphate + choline. It catalyses the reaction an N-(acyl)-sphingosylphosphoethanolamine = an N-(acyl)-sphingosyl-1,3-cyclic phosphate + ethanolamine. It carries out the reaction a 1-acyl-sn-glycero-3-phosphocholine = a 1-acyl-sn-glycero-2,3-cyclic phosphate + choline. The catalysed reaction is a 1-acyl-sn-glycero-3-phosphoethanolamine = a 1-acyl-sn-glycero-2,3-cyclic phosphate + ethanolamine. Dermonecrotic toxins cleave the phosphodiester linkage between the phosphate and headgroup of certain phospholipids (sphingolipid and lysolipid substrates), forming an alcohol (often choline) and a cyclic phosphate. This toxin acts on sphingomyelin (SM). It may also act on ceramide phosphoethanolamine (CPE), lysophosphatidylcholine (LPC) and lysophosphatidylethanolamine (LPE), but not on lysophosphatidylserine (LPS), and lysophosphatidylglycerol (LPG). It acts by transphosphatidylation, releasing exclusively cyclic phosphate products as second products. In vivo, intradermal injection induces dermonecrosis. Induces, hemolysis, vascular permeability, edema, inflammatory response, and platelet aggregation. In Loxosceles gaucho (Spider), this protein is Dermonecrotic toxin LgSicTox-alphaI-1.